Here is a 1486-residue protein sequence, read N- to C-terminus: Chromosome partition protein MukB (1486 aa).

G34–S41 serves as a coordination point for ATP. Coiled-coil stretches lie at residues S334 to Q418, L444 to Q480, and R509 to V603. Positions P666 to R783 are flexible hinge. Coiled coils occupy residues E835–E923, E977–A1115, and V1209–S1266.

Belongs to the SMC family. MukB subfamily. Homodimerization via its hinge domain. Binds to DNA via its C-terminal region. Interacts, and probably forms a ternary complex, with MukE and MukF via its C-terminal region. The complex formation is stimulated by calcium or magnesium. Interacts with tubulin-related protein FtsZ.

It localises to the cytoplasm. The protein resides in the nucleoid. Functionally, plays a central role in chromosome condensation, segregation and cell cycle progression. Functions as a homodimer, which is essential for chromosome partition. Involved in negative DNA supercoiling in vivo, and by this means organize and compact chromosomes. May achieve or facilitate chromosome segregation by condensation DNA from both sides of a centrally located replisome during cell division. This Shigella sonnei (strain Ss046) protein is Chromosome partition protein MukB.